The following is a 953-amino-acid chain: Translation initiation factor IF-2 (953 aa).

Disordered stretches follow at residues 51–242 and 279–363; these read SKAS…QEAK and TKLK…TERK. Composition is skewed to basic and acidic residues over residues 80-89 and 98-111; these read TGSEHVEKTQ and FKAE…EQAA. A compositionally biased stretch (polar residues) spans 131–140; the sequence is QPNNHQTNEQ. Basic and acidic residues predominate over residues 149–188; it reads SQGDTNDKRIERKASNVSPRHDNHQLVGDRNRSFAKENHK. Residues 191–207 are compositionally biased toward polar residues; it reads RFTNQKKQGRQEPQSKS. A compositionally biased stretch (basic and acidic residues) spans 229–242; it reads RQSETRFRAQQEAK. Polar residues predominate over residues 282 to 291; it reads KSSNISAKST. The span at 300–317 shows a compositional bias: basic and acidic residues; sequence ARPEKNRELTHHSQEGQK. Residues 322–338 show a composition bias toward low complexity; it reads SWNSQNQVRNQKNSNWN. The span at 339 to 348 shows a compositional bias: basic residues; sequence KNKKTKKGKN. Residues 454-623 form the tr-type G domain; that stretch reads ERAPVVTIMG…LLVAEVEELK (170 aa). Residues 463–470 are G1; it reads GHVDHGKT. A GTP-binding site is contributed by 463–470; it reads GHVDHGKT. Positions 488–492 are G2; sequence GITQH. The interval 509-512 is G3; the sequence is DTPG. Residues 509–513 and 563–566 each bind GTP; these read DTPGH and NKID. The tract at residues 563 to 566 is G4; the sequence is NKID. Positions 599 to 601 are G5; sequence SAK.

It belongs to the TRAFAC class translation factor GTPase superfamily. Classic translation factor GTPase family. IF-2 subfamily.

The protein localises to the cytoplasm. Its function is as follows. One of the essential components for the initiation of protein synthesis. Protects formylmethionyl-tRNA from spontaneous hydrolysis and promotes its binding to the 30S ribosomal subunits. Also involved in the hydrolysis of GTP during the formation of the 70S ribosomal complex. The chain is Translation initiation factor IF-2 from Streptococcus pyogenes serotype M49 (strain NZ131).